The sequence spans 697 residues: Elongation factor G (697 aa).

A tr-type G domain is found at 8–283; that stretch reads EHIRNIGICA…AVVDFLPSPT (276 aa). GTP contacts are provided by residues 17-24, 81-85, and 135-138; these read AHIDAGKT, DTPGH, and NKMD.

This sequence belongs to the TRAFAC class translation factor GTPase superfamily. Classic translation factor GTPase family. EF-G/EF-2 subfamily.

Its subcellular location is the cytoplasm. In terms of biological role, catalyzes the GTP-dependent ribosomal translocation step during translation elongation. During this step, the ribosome changes from the pre-translocational (PRE) to the post-translocational (POST) state as the newly formed A-site-bound peptidyl-tRNA and P-site-bound deacylated tRNA move to the P and E sites, respectively. Catalyzes the coordinated movement of the two tRNA molecules, the mRNA and conformational changes in the ribosome. This chain is Elongation factor G, found in Rickettsia massiliae (strain Mtu5).